Here is a 293-residue protein sequence, read N- to C-terminus: 4-hydroxy-tetrahydrodipicolinate synthase (293 aa).

Thr-45 lines the pyruvate pocket. Tyr-133 serves as the catalytic Proton donor/acceptor. Lys-161 (schiff-base intermediate with substrate) is an active-site residue. Residue Val-203 participates in pyruvate binding.

Belongs to the DapA family. Homotetramer; dimer of dimers.

Its subcellular location is the cytoplasm. It carries out the reaction L-aspartate 4-semialdehyde + pyruvate = (2S,4S)-4-hydroxy-2,3,4,5-tetrahydrodipicolinate + H2O + H(+). Its pathway is amino-acid biosynthesis; L-lysine biosynthesis via DAP pathway; (S)-tetrahydrodipicolinate from L-aspartate: step 3/4. Its function is as follows. Catalyzes the condensation of (S)-aspartate-beta-semialdehyde [(S)-ASA] and pyruvate to 4-hydroxy-tetrahydrodipicolinate (HTPA). The protein is 4-hydroxy-tetrahydrodipicolinate synthase of Exiguobacterium sp. (strain ATCC BAA-1283 / AT1b).